The following is a 536-amino-acid chain: Phosphoenolpyruvate carboxykinase (ATP) (536 aa).

Substrate contacts are provided by Arg-61, Tyr-195, and Lys-201. Residues Lys-201, His-220, and 236–244 each bind ATP; that span reads GLSGTGKTT. Residues Lys-201 and His-220 each contribute to the Mn(2+) site. Residue Asp-257 coordinates Mn(2+). Residues Glu-285, Arg-322, and Thr-447 each contribute to the ATP site. A substrate-binding site is contributed by Arg-322.

It belongs to the phosphoenolpyruvate carboxykinase (ATP) family. Requires Mn(2+) as cofactor.

Its subcellular location is the cytoplasm. It carries out the reaction oxaloacetate + ATP = phosphoenolpyruvate + ADP + CO2. Its pathway is carbohydrate biosynthesis; gluconeogenesis. Functionally, involved in the gluconeogenesis. Catalyzes the conversion of oxaloacetate (OAA) to phosphoenolpyruvate (PEP) through direct phosphoryl transfer between the nucleoside triphosphate and OAA. This is Phosphoenolpyruvate carboxykinase (ATP) from Rhizobium rhizogenes (strain K84 / ATCC BAA-868) (Agrobacterium radiobacter).